The sequence spans 237 residues: Chloride intracellular channel protein 3 (237 aa).

Positions 1–89 are required for insertion into the membrane; the sequence is MAETTKLQLF…EEFLEETLGP (89 aa). The GST N-terminal domain maps to 13–91; sequence ASEDGESVGH…FLEETLGPPD (79 aa). Residues 23-26 carry the G-site motif; sequence CPSC. Cysteine 23 and cysteine 26 are disulfide-bonded. Residues 25 to 45 traverse the membrane as a helical segment; it reads SCQRLFMVLLLKGVPFTLTTV. Residues 69-236 form the GST C-terminal domain; the sequence is DGDVKTDTLQ…LAAYQPAVHP (168 aa). Position 160 is a phosphoserine (serine 160).

Belongs to the chloride channel CLIC family. As to quaternary structure, associated with the C-terminal of MAPK15.

Its subcellular location is the nucleus. It localises to the membrane. The protein resides in the cell membrane. The protein localises to the cytoplasm. It is found in the secreted. Its subcellular location is the extracellular space. It localises to the extracellular matrix. It carries out the reaction chloride(in) = chloride(out). Functionally, in the soluble state, catalyzes glutaredoxin-like thiol disulfide exchange reactions with reduced glutathione as electron donor. Reduced in a glutathione-dependent way and secreted into the extracellular matrix where it activates TGM2 and promotes blood vessel growth during tissue remodeling as occurs in tumorigenesis. Can reduce specific cysteines in TGM2 and regulate cofactor binding. Can insert into membranes and form outwardly rectifying chloride ion channels. May participate in cellular growth control. In Mus musculus (Mouse), this protein is Chloride intracellular channel protein 3.